A 427-amino-acid polypeptide reads, in one-letter code: Histidinol dehydrogenase (427 aa).

Residues Ser232, Gln254, and His257 each coordinate substrate. Positions 254 and 257 each coordinate Zn(2+). Active-site proton acceptor residues include Glu322 and His323. His323, Asp356, Glu410, and His415 together coordinate substrate. Asp356 provides a ligand contact to Zn(2+). His415 contributes to the Zn(2+) binding site.

This sequence belongs to the histidinol dehydrogenase family. The cofactor is Zn(2+).

It carries out the reaction L-histidinol + 2 NAD(+) + H2O = L-histidine + 2 NADH + 3 H(+). It participates in amino-acid biosynthesis; L-histidine biosynthesis; L-histidine from 5-phospho-alpha-D-ribose 1-diphosphate: step 9/9. Its function is as follows. Catalyzes the sequential NAD-dependent oxidations of L-histidinol to L-histidinaldehyde and then to L-histidine. The polypeptide is Histidinol dehydrogenase (Listeria monocytogenes serotype 4b (strain F2365)).